Reading from the N-terminus, the 68-residue chain is Pleurocidin (68 aa).

A signal peptide spans 1-22 (MKFTATFLMIAIFVLMVEPGEC). Residues 48 to 68 (GDKQELNKRAVDEDPNVIVFE) constitute a propeptide that is removed on maturation.

It belongs to the pleurocidin family. Goblet cells.

The protein localises to the secreted. Functionally, antimicrobial peptide with potent activity against Gram-positive and Gram-negative bacteria. Activity against E.coli and B.subtilis. Weaker activity against L.mucor, s.marcescens and P.aeruginosa. May play a role in innate host defense. In Pseudopleuronectes americanus (Winter flounder), this protein is Pleurocidin (ple2).